Reading from the N-terminus, the 154-residue chain is Large ribosomal subunit protein uL22 (154 aa).

This sequence belongs to the universal ribosomal protein uL22 family. As to quaternary structure, part of the 50S ribosomal subunit.

This protein binds specifically to 23S rRNA. It makes multiple contacts with different domains of the 23S rRNA in the assembled 50S subunit and ribosome. Its function is as follows. The globular domain of the protein is located near the polypeptide exit tunnel on the outside of the subunit, while an extended beta-hairpin is found that lines the wall of the exit tunnel in the center of the 70S ribosome. This is Large ribosomal subunit protein uL22 from Methanosphaera stadtmanae (strain ATCC 43021 / DSM 3091 / JCM 11832 / MCB-3).